Consider the following 204-residue polypeptide: Leucyl/phenylalanyl-tRNA--protein transferase (204 aa).

This sequence belongs to the L/F-transferase family.

The protein resides in the cytoplasm. The catalysed reaction is N-terminal L-lysyl-[protein] + L-leucyl-tRNA(Leu) = N-terminal L-leucyl-L-lysyl-[protein] + tRNA(Leu) + H(+). It carries out the reaction N-terminal L-arginyl-[protein] + L-leucyl-tRNA(Leu) = N-terminal L-leucyl-L-arginyl-[protein] + tRNA(Leu) + H(+). The enzyme catalyses L-phenylalanyl-tRNA(Phe) + an N-terminal L-alpha-aminoacyl-[protein] = an N-terminal L-phenylalanyl-L-alpha-aminoacyl-[protein] + tRNA(Phe). Functions in the N-end rule pathway of protein degradation where it conjugates Leu, Phe and, less efficiently, Met from aminoacyl-tRNAs to the N-termini of proteins containing an N-terminal arginine or lysine. The sequence is that of Leucyl/phenylalanyl-tRNA--protein transferase from Rhizobium etli (strain ATCC 51251 / DSM 11541 / JCM 21823 / NBRC 15573 / CFN 42).